Here is a 367-residue protein sequence, read N- to C-terminus: Quinolinate synthase (367 aa).

Positions 45 and 62 each coordinate iminosuccinate. Residue C109 coordinates [4Fe-4S] cluster. Iminosuccinate is bound by residues 140 to 142 (YVN) and S161. [4Fe-4S] cluster is bound at residue C229. Iminosuccinate is bound by residues 255 to 257 (HPE) and T272. C319 provides a ligand contact to [4Fe-4S] cluster.

This sequence belongs to the quinolinate synthase family. Type 3 subfamily. [4Fe-4S] cluster is required as a cofactor.

It is found in the cytoplasm. The enzyme catalyses iminosuccinate + dihydroxyacetone phosphate = quinolinate + phosphate + 2 H2O + H(+). It functions in the pathway cofactor biosynthesis; NAD(+) biosynthesis; quinolinate from iminoaspartate: step 1/1. Its function is as follows. Catalyzes the condensation of iminoaspartate with dihydroxyacetone phosphate to form quinolinate. The protein is Quinolinate synthase of Geobacillus sp. (strain WCH70).